Consider the following 178-residue polypeptide: TM2 domain-containing protein biscotti (178 aa).

The signal sequence occupies residues Met1–Gln18. Residues Ile19–Ser99 are Extracellular-facing. Asn69 and Asn75 each carry an N-linked (GlcNAc...) asparagine glycan. In terms of domain architecture, TM2 spans Thr94–Val137. Residues Val100–Leu120 traverse the membrane as a helical segment. The Cytoplasmic portion of the chain corresponds to Lys121 to Thr124. The chain crosses the membrane as a helical span at residues Leu125 to Gly145. The Extracellular portion of the chain corresponds to Pro146–Trp178. An N-linked (GlcNAc...) asparagine glycan is attached at Asn168.

It belongs to the TM2 family.

The protein resides in the membrane. Functionally, positive regulator of Notch signaling. Maternal neurogenic factor involved in Notch signaling-dependent neuroectodermal specification during early embryogenesis. Functions cooperatively with amx/TM2D3 and amrt/TM2D2. This chain is TM2 domain-containing protein biscotti, found in Drosophila melanogaster (Fruit fly).